The primary structure comprises 68 residues: U2-agatoxin-Ao1u (68 aa).

Positions 1 to 20 are cleaved as a signal peptide; sequence MKAIISLLLISAMVFSMIEA. Residues 21 to 34 constitute a propeptide that is removed on maturation; the sequence is VPLEEGLQLFEGER. Intrachain disulfides connect cysteine 36/cysteine 52, cysteine 43/cysteine 57, and cysteine 51/cysteine 67.

The protein belongs to the neurotoxin 01 (U2-agtx) family. As to expression, expressed by the venom gland.

It is found in the secreted. In terms of biological role, insect active toxin causing rapid but reversible paralysis in crickets. No activity shown in mammals. Does not show effect on mammalian voltage-gated calcium channels. The protein is U2-agatoxin-Ao1u of Agelena orientalis (Funnel-web spider).